A 468-amino-acid chain; its full sequence is Putative amidase AmiC (468 aa).

Catalysis depends on charge relay system residues Lys-80 and Ser-155. Ser-179 (acyl-ester intermediate) is an active-site residue.

It belongs to the amidase family.

The enzyme catalyses a monocarboxylic acid amide + H2O = a monocarboxylate + NH4(+). The polypeptide is Putative amidase AmiC (amiC) (Mycobacterium leprae (strain TN)).